The sequence spans 147 residues: Cyanate hydratase (147 aa).

Residues Arg88, Glu91, and Ser114 contribute to the active site.

Belongs to the cyanase family.

The enzyme catalyses cyanate + hydrogencarbonate + 3 H(+) = NH4(+) + 2 CO2. Functionally, catalyzes the reaction of cyanate with bicarbonate to produce ammonia and carbon dioxide. In Prochlorococcus marinus (strain NATL2A), this protein is Cyanate hydratase.